The primary structure comprises 438 residues: MGKELDNRTLDFYFEKYGKKKTSTEPSYKDIIEYITALISENLEDYQSQHTKLINIILNLVYPIKYFPHHLYDLGYRPKKGSTLGVRIVLDGIYYTKNGNPAEITPDVILVNDNDTHVLIFECKSKSIKKEQLEKYLKLKENLHVIINKGYISVTKNPRLYKSDVSYMSFDDLTTHPVLKDTEDIQILKVSPGEISLERGNYENQKLNKIFPITWGEKEKPSYDLLICDAENDKEGSLFKILILRELVSMALSGHDEPEVGMVFSKKIILPKGEYSLESLKEDDFKEIENIIQKLCKKKCIIDKENKLLRVDKDIVILPENKPLNANVLKLIDALNISINMDSLVEKEFTVGTIMDALYRSTSISIIDYFYKDYKNIVSKRIEETLKLFSNRNLKGYLKKVSRKWRIKVIKDKRMARKFKESCKEEIGAIKSWQTTLD.

This is an uncharacterized protein from Methanocaldococcus jannaschii (strain ATCC 43067 / DSM 2661 / JAL-1 / JCM 10045 / NBRC 100440) (Methanococcus jannaschii).